A 401-amino-acid polypeptide reads, in one-letter code: Calreticulin (401 aa).

An N-terminal signal peptide occupies residues 1 to 18 (MRKELWLGLLLSSQAVLS). A disulfide bond links C103 and C134. An alpha-D-glucoside contacts are provided by Y107, K109, Y125, and D132. 7 tandem repeats follow at residues 187 to 198 (KESGTLEEDWEI), 206 to 217 (DPEDKKPADWVD), 223 to 234 (DPEDKKPEDWDK), 241 to 252 (DPDATQPDDWDE), 256 to 266 (GKWEAPMISNP), 270 to 280 (GEWKAKKIPNP), and 284 to 294 (GVWKPRDIPNP). The segment at 187-252 (KESGTLEEDW…DATQPDDWDE (66 aa)) is 4 X approximate repeats. 2 stretches are compositionally biased toward basic and acidic residues: residues 199-214 (LKPKTIPDPEDKKPAD) and 224-236 (PEDKKPEDWDKEP). The disordered stretch occupies residues 199-263 (LKPKTIPDPE…EDGKWEAPMI (65 aa)). Residues 246 to 256 (QPDDWDEEEDG) show a composition bias toward acidic residues. Residues 256 to 294 (GKWEAPMISNPKYKGEWKAKKIPNPAYKGVWKPRDIPNP) form a 3 X approximate repeats region. Residue D314 participates in an alpha-D-glucoside binding. The segment at 341–401 (DQTNGATKDA…EEEDDKKDEL (61 aa)) is disordered. Over residues 348-381 (KDAEKKAFDSAEADKRKKEEDERKKQEEEEKKTA) the composition is skewed to basic and acidic residues. Positions 382 to 401 (EEDEDDDDEEEEEDDKKDEL) are enriched in acidic residues. Positions 398 to 401 (KDEL) match the Prevents secretion from ER motif.

Belongs to the calreticulin family.

The protein resides in the endoplasmic reticulum lumen. Molecular calcium-binding chaperone promoting folding, oligomeric assembly and quality control in the ER via the calreticulin/calnexin cycle. This lectin may interact transiently with almost all of the monoglucosylated glycoproteins that are synthesized in the ER. The polypeptide is Calreticulin (Euglena gracilis).